Here is a 163-residue protein sequence, read N- to C-terminus: UPF0763 protein C8J_0930 (163 aa).

Belongs to the UPF0763 family.

The protein is UPF0763 protein C8J_0930 of Campylobacter jejuni subsp. jejuni serotype O:6 (strain 81116 / NCTC 11828).